The sequence spans 805 residues: Leucine--tRNA ligase (805 aa).

The short motif at 40 to 51 (PYPSGSGLHVGH) is the 'HIGH' region element. The 'KMSKS' region motif lies at 576–580 (KMSKS). Position 579 (lysine 579) interacts with ATP.

This sequence belongs to the class-I aminoacyl-tRNA synthetase family.

Its subcellular location is the cytoplasm. It carries out the reaction tRNA(Leu) + L-leucine + ATP = L-leucyl-tRNA(Leu) + AMP + diphosphate. In Chlorobium phaeovibrioides (strain DSM 265 / 1930) (Prosthecochloris vibrioformis (strain DSM 265)), this protein is Leucine--tRNA ligase.